A 228-amino-acid chain; its full sequence is Ribosomal RNA small subunit methyltransferase G (228 aa).

S-adenosyl-L-methionine contacts are provided by residues glycine 89, leucine 94, 140–141 (VE), and arginine 159.

Belongs to the methyltransferase superfamily. RNA methyltransferase RsmG family.

The protein localises to the cytoplasm. The enzyme catalyses guanosine(527) in 16S rRNA + S-adenosyl-L-methionine = N(7)-methylguanosine(527) in 16S rRNA + S-adenosyl-L-homocysteine. Its function is as follows. Specifically methylates the N7 position of guanine in position 527 of 16S rRNA. This Burkholderia multivorans (strain ATCC 17616 / 249) protein is Ribosomal RNA small subunit methyltransferase G.